We begin with the raw amino-acid sequence, 87 residues long: Small ribosomal subunit protein bS20 (87 aa).

A compositionally biased stretch (basic residues) spans 1 to 22 (MANIKSAKKRAVQSEKRRKHNA). The disordered stretch occupies residues 1-27 (MANIKSAKKRAVQSEKRRKHNASSRSM).

The protein belongs to the bacterial ribosomal protein bS20 family.

Binds directly to 16S ribosomal RNA. This chain is Small ribosomal subunit protein bS20, found in Pectobacterium atrosepticum (strain SCRI 1043 / ATCC BAA-672) (Erwinia carotovora subsp. atroseptica).